A 399-amino-acid chain; its full sequence is Zona occludens toxin (399 aa).

Increases the permeability of the small intestine mucosa by affecting the structure of intercellular tight junctions (zonula occludens). The sequence is that of Zona occludens toxin (zot) from Vibrio cholerae serotype O1 (strain ATCC 39315 / El Tor Inaba N16961).